Here is a 326-residue protein sequence, read N- to C-terminus: Beta-ketoacyl-[acyl-carrier-protein] synthase III (326 aa).

Active-site residues include Cys-120 and His-253. Residues 254 to 258 (QANIR) are ACP-binding. The active site involves Asn-283.

Belongs to the thiolase-like superfamily. FabH family. Homodimer.

The protein localises to the cytoplasm. It catalyses the reaction malonyl-[ACP] + acetyl-CoA + H(+) = 3-oxobutanoyl-[ACP] + CO2 + CoA. It functions in the pathway lipid metabolism; fatty acid biosynthesis. Functionally, catalyzes the condensation reaction of fatty acid synthesis by the addition to an acyl acceptor of two carbons from malonyl-ACP. Catalyzes the first condensation reaction which initiates fatty acid synthesis and may therefore play a role in governing the total rate of fatty acid production. Possesses both acetoacetyl-ACP synthase and acetyl transacylase activities. Its substrate specificity determines the biosynthesis of branched-chain and/or straight-chain of fatty acids. The sequence is that of Beta-ketoacyl-[acyl-carrier-protein] synthase III from Cupriavidus pinatubonensis (strain JMP 134 / LMG 1197) (Cupriavidus necator (strain JMP 134)).